The following is a 144-amino-acid chain: Transcription antitermination protein NusB (144 aa).

This sequence belongs to the NusB family.

Involved in transcription antitermination. Required for transcription of ribosomal RNA (rRNA) genes. Binds specifically to the boxA antiterminator sequence of the ribosomal RNA (rrn) operons. This chain is Transcription antitermination protein NusB, found in Leifsonia xyli subsp. xyli (strain CTCB07).